Consider the following 399-residue polypeptide: Polypyrimidine tract-binding protein homolog 1 (399 aa).

N-acetylserine is present on S2. RRM domains lie at 17–95 (KVVH…YSNR), 109–196 (GNVL…YSAH), and 242–322 (SNVL…YSRH). The disordered stretch occupies residues 352 to 399 (AVSGSAPPAGWQNPQAQSQYSGYGGSPYMYPSSDPNGASPSGQPPYYG). Residues 365–384 (PQAQSQYSGYGGSPYMYPSS) show a composition bias toward low complexity.

Its subcellular location is the nucleus. Functionally, plays a role in pre-mRNA splicing. Binds to the polypyrimidine tract of introns. May promote the binding of U2 snRNP to pre-mRNA. This Arabidopsis thaliana (Mouse-ear cress) protein is Polypyrimidine tract-binding protein homolog 1 (PTB).